A 243-amino-acid chain; its full sequence is MATVSMRDMLKAGVHFGHQTRYWNPKMKPFIFGARNKVHIINLEKTVPMFNEALAELAKIGNKKGKVLFVGTKRAASEAVKEAAINSDQYYVNNRWLGGMLTNFKTVRQSIKRLKEYEVQAQDGTFEQITKKEALMRTRSMEKLEKSLGGIKNMNGLPDALFVIDADHEHIAVKEANNLGIPVFAVVDTNSNPDGVDYIIPGNDDAIRAIQLYLNAAADSVKSGRNQDVAAAVAEKDGFVEAE.

It belongs to the universal ribosomal protein uS2 family.

The sequence is that of Small ribosomal subunit protein uS2 from Aliivibrio salmonicida (strain LFI1238) (Vibrio salmonicida (strain LFI1238)).